Consider the following 368-residue polypeptide: Isopentenyl-diphosphate delta-isomerase (368 aa).

7 to 8 is a substrate binding site; that stretch reads RK. FMN contacts are provided by residues Thr-65, 66-68, Ser-96, and Asn-125; that span reads GMT. 96–98 lines the substrate pocket; that stretch reads SQR. Gln-160 lines the substrate pocket. Glu-161 is a Mg(2+) binding site. Residues Lys-193, Ser-218, Thr-223, 275-277, and 296-297 contribute to the FMN site; these read GIR and AL.

It belongs to the IPP isomerase type 2 family. In terms of assembly, homooctamer. Dimer of tetramers. It depends on FMN as a cofactor. Requires NADPH as cofactor. The cofactor is Mg(2+).

The protein localises to the cytoplasm. It catalyses the reaction isopentenyl diphosphate = dimethylallyl diphosphate. In terms of biological role, involved in the biosynthesis of isoprenoids. Catalyzes the 1,3-allylic rearrangement of the homoallylic substrate isopentenyl (IPP) to its allylic isomer, dimethylallyl diphosphate (DMAPP). The sequence is that of Isopentenyl-diphosphate delta-isomerase from Saccharolobus islandicus (strain M.16.27) (Sulfolobus islandicus).